A 93-amino-acid polypeptide reads, in one-letter code: UPF0298 protein GWCH70_0997 (93 aa).

Belongs to the UPF0298 family.

It localises to the cytoplasm. This chain is UPF0298 protein GWCH70_0997, found in Geobacillus sp. (strain WCH70).